A 586-amino-acid polypeptide reads, in one-letter code: Asparagine synthetase [glutamine-hydrolyzing] 1 (586 aa).

The For GATase activity role is filled by Cys-2. The Glutamine amidotransferase type-2 domain maps to 2–185 (CGILAVLGCS…PGHLYSSRER (184 aa)). Residues 50-54 (RLAIV), 75-77 (NGE), and Asp-98 each bind L-glutamine. In terms of domain architecture, Asparagine synthetase spans 193 to 516 (PTWFSESIPS…PQNSARLTVP (324 aa)). ATP contacts are provided by residues Leu-231, Val-267, and 341–342 (SG).

It carries out the reaction L-aspartate + L-glutamine + ATP + H2O = L-asparagine + L-glutamate + AMP + diphosphate + H(+). The protein operates within amino-acid biosynthesis; L-asparagine biosynthesis; L-asparagine from L-aspartate (L-Gln route): step 1/1. In Lotus japonicus (Lotus corniculatus var. japonicus), this protein is Asparagine synthetase [glutamine-hydrolyzing] 1 (AS1).